The primary structure comprises 114 residues: Iron-sulfur cluster insertion protein ErpA (114 aa).

Cysteine 42, cysteine 106, and cysteine 108 together coordinate iron-sulfur cluster.

It belongs to the HesB/IscA family. As to quaternary structure, homodimer. Iron-sulfur cluster serves as cofactor.

Functionally, required for insertion of 4Fe-4S clusters for at least IspG. This chain is Iron-sulfur cluster insertion protein ErpA, found in Yersinia pseudotuberculosis serotype O:1b (strain IP 31758).